The chain runs to 360 residues: uncharacterized protein (360 aa).

Residues 4 to 235 (LSLQHIQKIY…PANMFVAGFI (232 aa)) enclose the ABC transporter domain. 37-44 (GPSGCGKS) provides a ligand contact to ATP.

It belongs to the ABC transporter superfamily.

This is an uncharacterized protein from Escherichia coli O157:H7.